We begin with the raw amino-acid sequence, 161 residues long: Probable ubiquitin-conjugating enzyme E2 16 (161 aa).

A UBC core domain is found at 15–161 (IATNRLQKEL…TRWWFHDDKV (147 aa)). Catalysis depends on Cys-99, which acts as the Glycyl thioester intermediate.

The protein belongs to the ubiquitin-conjugating enzyme family.

The enzyme catalyses S-ubiquitinyl-[E1 ubiquitin-activating enzyme]-L-cysteine + [E2 ubiquitin-conjugating enzyme]-L-cysteine = [E1 ubiquitin-activating enzyme]-L-cysteine + S-ubiquitinyl-[E2 ubiquitin-conjugating enzyme]-L-cysteine.. It participates in protein modification; protein ubiquitination. Accepts the ubiquitin from the E1 complex and catalyzes its covalent attachment to other proteins. The chain is Probable ubiquitin-conjugating enzyme E2 16 (UBC16) from Arabidopsis thaliana (Mouse-ear cress).